The chain runs to 229 residues: Non-structural protein P8 (229 aa).

A run of 2 helical transmembrane segments spans residues I119–L139 and S162–A182.

This sequence belongs to the orbivirus NS3 family. As to quaternary structure, forms homooligomers via coiled-coil motif. Interacts with host OPTN; this interaction inhibits innate immune response.

It localises to the host cell membrane. The protein resides in the host Golgi apparatus. In terms of biological role, plays a role in the inhibition of host innate immune response. Interacts with host OPTN and thus inhibits the recruitment of TBK1 to the host Golgi apparatus. In turn, downstream partner IRF3 cannot be activated and IFN-beta production is impaired. Its function is as follows. Facilitates viral particle release either by increasing plasma membrane permeability through a viroporin-like activity or by viral budding. The chain is Non-structural protein P8 (Segment-10) from Antilocapra americana (Pronghorn).